The chain runs to 250 residues: MELISIPALSDNYIWLLCDENRHVVIVDPAESQPVLDTLESRGWIPDAILLTHHHHDHVGGVPGIIDRFPELLVYGPAETQSKGATIIVCGGDSINFGHFSFQIIDVPGHTLGHIAFYQAPYLFCGDTLFSGGCGRLFEGTAEQMYTSIGKIAELPDDTLICCAHEYTISNMKFAHAVLPNQTISEYQQKVIRMRENNQPTIPTTLQTEKKINIFLKCDDIDLQRNIGITPNSQPLSAVFHQLRRQKDQF.

Histidine 53, histidine 55, aspartate 57, histidine 58, histidine 110, aspartate 127, and histidine 165 together coordinate Zn(2+).

Belongs to the metallo-beta-lactamase superfamily. Glyoxalase II family. As to quaternary structure, monomer. Zn(2+) serves as cofactor.

It carries out the reaction an S-(2-hydroxyacyl)glutathione + H2O = a 2-hydroxy carboxylate + glutathione + H(+). Its pathway is secondary metabolite metabolism; methylglyoxal degradation; (R)-lactate from methylglyoxal: step 2/2. In terms of biological role, thiolesterase that catalyzes the hydrolysis of S-D-lactoyl-glutathione to form glutathione and D-lactic acid. This Photorhabdus laumondii subsp. laumondii (strain DSM 15139 / CIP 105565 / TT01) (Photorhabdus luminescens subsp. laumondii) protein is Hydroxyacylglutathione hydrolase.